A 171-amino-acid polypeptide reads, in one-letter code: Co-chaperone protein HscB homolog (171 aa).

Residues 3 to 75 form the J domain; that stretch reads SHFALFDLEP…SQRARYLLSL (73 aa).

This sequence belongs to the HscB family. In terms of assembly, interacts with HscA and stimulates its ATPase activity.

Its function is as follows. Co-chaperone involved in the maturation of iron-sulfur cluster-containing proteins. Seems to help targeting proteins to be folded toward HscA. In Azotobacter vinelandii, this protein is Co-chaperone protein HscB homolog.